A 685-amino-acid chain; its full sequence is MNPATDPVSAAAAALAPPPQPPQPHRLSTSCNRHPEERFTGFCPSCLCERLSVLDQTNNGGSSSSSKKPPTISAAALKALFKPSGNNGVGGVNTNGNGRVKPGFFPELRRTKSFSASKNNEGFSGVFEPQRRSCDVRLRSSLWNLFSQDEQRNLPSNVTGGEIDVEPRKSSVAEPVLEVNDEGEAESDDEELEEEEEEDYVEAGDFEILNDSGELMREKSDEIVEVREEIEEAVKPTKGLSEEELKPIKDYIDLDSQTKKPSVRRSFWSAASVFSKKLQKWRQNQKMKKRRNGGDHRPGSARLPVEKPIGRQLRDTQSEIADYGYGRRSCDTDPRFSLDAGRFSLDAGRFSVDIGRISLDDPRYSFDEPRASWDGSLIGRTMFPPAARAPPPPSMLSVVEDAPPPVHRHVTRADMQFPVEEPAPPPPVVNQTNGVSDPVIIPGGSIQTRDYYTDSSSRRRKSLDRSSSSMRKTAAAVVADMDEPKLSVSSAISIDAYSGSLRDNNNYAVETADNGSFREPAMMIGDRKVNSNDNNKKSRRWGKWSILGLIYRKSVNKYEEEEEEEEDRYRRLNGGMVERSLSESWPELRNGGGGGGGPRMVRSNSNVSWRSSGGGSARKVNGLDRRNKSSRYSPKNGENGMLKFYLPHMKASRRMSGTGGAGGGGGGGWANSHGHSIARSVMRLY.

Disordered stretches follow at residues 1-34 (MNPA…CNRH), 152-202 (RNLP…DYVE), and 280-314 (KWRQ…RQLR). The span at 179-202 (VNDEGEAESDDEELEEEEEEDYVE) shows a compositional bias: acidic residues. Over residues 280–291 (KWRQNQKMKKRR) the composition is skewed to basic residues. The segment covering 292-314 (NGGDHRPGSARLPVEKPIGRQLR) has biased composition (basic and acidic residues). Serine 318 is subject to Phosphoserine. Residues 419-471 (VEEPAPPPPVVNQTNGVSDPVIIPGGSIQTRDYYTDSSSRRRKSLDRSSSSMR) are disordered. The stretch at 549–578 (LIYRKSVNKYEEEEEEEEDRYRRLNGGMVE) forms a coiled coil. The interval 584 to 640 (SWPELRNGGGGGGGPRMVRSNSNVSWRSSGGGSARKVNGLDRRNKSSRYSPKNGENG) is disordered. Residues 601–611 (VRSNSNVSWRS) are compositionally biased toward low complexity.

The protein belongs to the OCTOPUS family. In terms of assembly, interacts with VCC. Phosphorylation at Ser-318 amplifies the promotion of protophloem differentiation. Expressed in provascular cells and phloem initials (e.g. protophloem, metaphloem, sieve element precursor cells and sieve element procambium precursor cells).

It is found in the cell membrane. The protein resides in the cytoplasm. Its function is as follows. Potentiates primary root protophloem differentiation. Required, together with VCC, for embryo provasculature development and cotyledon vascular complexity and connectivity. Regulates roots architecture. Mediates the recruitment of ASK7/BIN2 to the plasma membrane. The polypeptide is Protein OCTOPUS (Arabidopsis thaliana (Mouse-ear cress)).